The sequence spans 183 residues: ATP synthase subunit delta (183 aa).

Belongs to the ATPase delta chain family. F-type ATPases have 2 components, F(1) - the catalytic core - and F(0) - the membrane proton channel. F(1) has five subunits: alpha(3), beta(3), gamma(1), delta(1), epsilon(1). F(0) has three main subunits: a(1), b(2) and c(10-14). The alpha and beta chains form an alternating ring which encloses part of the gamma chain. F(1) is attached to F(0) by a central stalk formed by the gamma and epsilon chains, while a peripheral stalk is formed by the delta and b chains.

Its subcellular location is the cell inner membrane. In terms of biological role, f(1)F(0) ATP synthase produces ATP from ADP in the presence of a proton or sodium gradient. F-type ATPases consist of two structural domains, F(1) containing the extramembraneous catalytic core and F(0) containing the membrane proton channel, linked together by a central stalk and a peripheral stalk. During catalysis, ATP synthesis in the catalytic domain of F(1) is coupled via a rotary mechanism of the central stalk subunits to proton translocation. Its function is as follows. This protein is part of the stalk that links CF(0) to CF(1). It either transmits conformational changes from CF(0) to CF(1) or is implicated in proton conduction. The polypeptide is ATP synthase subunit delta (Nitratidesulfovibrio vulgaris (strain ATCC 29579 / DSM 644 / CCUG 34227 / NCIMB 8303 / VKM B-1760 / Hildenborough) (Desulfovibrio vulgaris)).